The sequence spans 192 residues: uncharacterized protein (192 aa).

The 132-residue stretch at 29–160 folds into the Nudix hydrolase domain; that stretch reads HRQAAVLIPI…PLDIYRRGDS (132 aa). Positions 67–89 match the Nudix box motif; the sequence is GAVDDTDASVIAAALREAEEEVA. Glutamate 83 and glutamate 87 together coordinate Mg(2+).

The protein belongs to the Nudix hydrolase family. PCD1 subfamily. Requires Mn(2+) as cofactor. Mg(2+) is required as a cofactor.

Functionally, probably mediates the hydrolysis of some nucleoside diphosphate derivatives. This is an uncharacterized protein from Shigella flexneri serotype 5b (strain 8401).